We begin with the raw amino-acid sequence, 225 residues long: MMYHIPGVLSPQDVARFREQLEQAEWVDGRVTTGAQGAQVKNNQQVDTRSTLYAALQNEVLNAVNQHALFFAAALPRTLSTPLFNRYQNNETYGFHVDGAVRSHPQNGWMRTDLSATLFLSDPQSYDGGELVVNDTFGQHRVKLPAGDLVLYPSSSLHCVTPVTRGVRVASFMWIQSMIRDDKKRAMLFELDKNIQSLKSRYGENEEILSLLNLYHNLLREWSEI.

The region spanning 78–177 (TLSTPLFNRY…RVASFMWIQS (100 aa)) is the Fe2OG dioxygenase domain. Residues His-96, Asp-98, and His-158 each coordinate Fe cation. Arg-168 serves as a coordination point for 2-oxoglutarate.

Fe(2+) serves as cofactor. It depends on L-ascorbate as a cofactor.

The chain is PKHD-type hydroxylase YbiX from Shigella boydii serotype 4 (strain Sb227).